Consider the following 348-residue polypeptide: Dehydrogenase orsE (348 aa).

Residue 43–46 (LDTH) participates in NADP(+) binding. Residue 130-137 (FAVEAAVC) coordinates substrate. NADP(+)-binding positions include 180-183 (SSSV), 203-206 (GAHN), and 272-273 (VH). Residue 292-296 (NDIAT) coordinates substrate. Residue 339–340 (VS) participates in NADP(+) binding.

The protein belongs to the zinc-containing alcohol dehydrogenase family. As to quaternary structure, monomer.

Its function is as follows. Dehydrogenase; part of the gene cluster that mediates the biosynthesis of orsellinic acid, as well as of the cathepsin K inhibitors F9775 A and F9775 B. The non-reducing polyketide synthase orsA produces orsellinic acid by condensing acetyl-CoA with 3 malonyl-CoA units. Further modifications by the decarboxylase orsB and the tyrosinase-like protein orsC lead to the production of F9775 A and F9775 B. The functions of orsD and orsE remain unclear since only orsB and orsC are required to convert orsellinic acid into F9775 A and F9775 B. The chain is Dehydrogenase orsE from Emericella nidulans (strain FGSC A4 / ATCC 38163 / CBS 112.46 / NRRL 194 / M139) (Aspergillus nidulans).